The chain runs to 207 residues: LPS-assembly lipoprotein LptE (207 aa).

The N-terminal stretch at methionine 1–glycine 19 is a signal peptide. Cysteine 20 carries N-palmitoyl cysteine lipidation. Residue cysteine 20 is the site of S-diacylglycerol cysteine attachment.

The protein belongs to the LptE lipoprotein family. As to quaternary structure, component of the lipopolysaccharide transport and assembly complex. Interacts with LptD.

It is found in the cell outer membrane. Its function is as follows. Together with LptD, is involved in the assembly of lipopolysaccharide (LPS) at the surface of the outer membrane. Required for the proper assembly of LptD. Binds LPS and may serve as the LPS recognition site at the outer membrane. In Yersinia enterocolitica serotype O:8 / biotype 1B (strain NCTC 13174 / 8081), this protein is LPS-assembly lipoprotein LptE.